A 602-amino-acid chain; its full sequence is uncharacterized protein (602 aa).

N-linked (GlcNAc...) asparagine glycans are attached at residues Asn305, Asn497, and Asn577.

Post-translationally, N-glycosylated.

Its subcellular location is the vacuole. This is an uncharacterized protein from Saccharomyces cerevisiae (strain ATCC 204508 / S288c) (Baker's yeast).